Reading from the N-terminus, the 444-residue chain is MSEMTPREIVSELDQHIIGQADAKRAVAIALRNRWRRMQLQEPLRHEVTPKNILMIGPTGVGKTEIARRLAKLANAPFIKVEATKFTEVGYVGKEVDSIIRDLTDSAMKLVRQQEIAKNRARAEDAAEERILDALLPPAKNQWGEVESHDSHSSTRQAFRKKLREGQLDDKEIEIDVSAGVSMGVEIMAPPGMEEMTNQLQSLFQNLGSDKTKKRKMKIKDGLKALIDDEAAKLINPEELKQKAIDAVEQNGIVFIDEIDKICKKGEYSGADVSREGVQRDLLPLVEGSTVSTKHGMVKTDHILFIASGAFQVARPSDLIPELQGRLPIRVELTALSAADFERILTEPHASLTEQYKALMATEGVNIAFTTDAVKKIAEAAFCVNEKTENIGARRLHTVMERLMDKISFSASDMNGQTVNIDAAYVADALGEVVENEDLSRFIL.

ATP-binding positions include Ile18 and 60–65; that span reads GVGKTE. The segment at 143 to 163 is disordered; sequence WGEVESHDSHSSTRQAFRKKL. 3 residues coordinate ATP: Asp257, Glu322, and Arg394.

The protein belongs to the ClpX chaperone family. HslU subfamily. In terms of assembly, a double ring-shaped homohexamer of HslV is capped on each side by a ring-shaped HslU homohexamer. The assembly of the HslU/HslV complex is dependent on binding of ATP.

The protein resides in the cytoplasm. Its function is as follows. ATPase subunit of a proteasome-like degradation complex; this subunit has chaperone activity. The binding of ATP and its subsequent hydrolysis by HslU are essential for unfolding of protein substrates subsequently hydrolyzed by HslV. HslU recognizes the N-terminal part of its protein substrates and unfolds these before they are guided to HslV for hydrolysis. This is ATP-dependent protease ATPase subunit HslU from Haemophilus influenzae (strain PittEE).